The chain runs to 279 residues: Tetra-spanning protein 1 (279 aa).

The next 2 helical transmembrane spans lie at 25–45 and 50–70; these read VWFS…LQAI and APPF…AIVL. An N-linked (GlcNAc...) asparagine glycan is attached at Asn-77. A helical transmembrane segment spans residues 100–122; sequence YFILALSMLIDRPILFSLAPYAI. A glycan (N-linked (GlcNAc...) asparagine) is linked at Asn-143. A helical membrane pass occupies residues 172 to 192; the sequence is MQLVASLETFLLFRLFFGVFL. The tract at residues 260 to 279 is disordered; that stretch reads VGTAQSRPTASSSTTAPSST. Low complexity predominate over residues 262–279; sequence TAQSRPTASSSTTAPSST.

It belongs to the PER33/POM33 family. In terms of assembly, interacts with RTN1 and YOP1.

It is found in the golgi apparatus membrane. Its subcellular location is the endoplasmic reticulum membrane. The protein localises to the nucleus membrane. In terms of biological role, required for the correct positioning of the cellular division plane by delimiting the actomyosin ring assembly at the cell equator. This Schizosaccharomyces pombe (strain 972 / ATCC 24843) (Fission yeast) protein is Tetra-spanning protein 1 (tts1).